The following is a 137-amino-acid chain: Nucleoside diphosphate kinase (137 aa).

ATP-binding residues include Lys-9, Phe-57, Arg-85, Thr-91, Arg-102, and Asn-112. Residue His-115 is the Pros-phosphohistidine intermediate of the active site.

It belongs to the NDK family. In terms of assembly, homotetramer. Mg(2+) is required as a cofactor.

The protein localises to the cytoplasm. The enzyme catalyses a 2'-deoxyribonucleoside 5'-diphosphate + ATP = a 2'-deoxyribonucleoside 5'-triphosphate + ADP. It carries out the reaction a ribonucleoside 5'-diphosphate + ATP = a ribonucleoside 5'-triphosphate + ADP. Its function is as follows. Major role in the synthesis of nucleoside triphosphates other than ATP. The ATP gamma phosphate is transferred to the NDP beta phosphate via a ping-pong mechanism, using a phosphorylated active-site intermediate. The polypeptide is Nucleoside diphosphate kinase (Sulfurovum sp. (strain NBC37-1)).